The following is a 200-amino-acid chain: NADH-quinone oxidoreductase subunit C (200 aa).

Belongs to the complex I 30 kDa subunit family. In terms of assembly, NDH-1 is composed of 14 different subunits. Subunits NuoB, C, D, E, F, and G constitute the peripheral sector of the complex.

The protein resides in the cell inner membrane. The catalysed reaction is a quinone + NADH + 5 H(+)(in) = a quinol + NAD(+) + 4 H(+)(out). Functionally, NDH-1 shuttles electrons from NADH, via FMN and iron-sulfur (Fe-S) centers, to quinones in the respiratory chain. The immediate electron acceptor for the enzyme in this species is believed to be ubiquinone. Couples the redox reaction to proton translocation (for every two electrons transferred, four hydrogen ions are translocated across the cytoplasmic membrane), and thus conserves the redox energy in a proton gradient. This is NADH-quinone oxidoreductase subunit C from Maricaulis maris (strain MCS10) (Caulobacter maris).